Here is a 226-residue protein sequence, read N- to C-terminus: Fibronectin type III domain-containing protein 9 (226 aa).

In terms of domain architecture, Fibronectin type-III spans 1–101 (MNIEVGNVSH…FHTLDKSPLA (101 aa)). The helical transmembrane segment at 113-133 (LWVLMAILLACFTAVLAFICL) threads the bilayer.

The protein localises to the membrane. The polypeptide is Fibronectin type III domain-containing protein 9 (Fndc9) (Mus musculus (Mouse)).